The chain runs to 380 residues: Cyclohexane-1-carbonyl-CoA dehydrogenase (380 aa).

It belongs to the acyl-CoA dehydrogenase family. In terms of assembly, homotetramer. FAD is required as a cofactor.

It catalyses the reaction cyclohexane-1-carbonyl-CoA + oxidized [electron-transfer flavoprotein] + H(+) = cyclohex-1-ene-1-carbonyl-CoA + reduced [electron-transfer flavoprotein]. Acyl-CoA dehydrogenase involved in the anaerobic degradation of cyclohexane carboxylic acid (CHC). Catalyzes the 1,2-dehydrogenation of cyclohexane-1-carbonyl-CoA (CHCoA) to cyclohex-1-ene-1-carbonyl-CoA (CHeneCoA). An alternative substrate, cyclohex-3-ene-1-carboxyl-CoA can be converted to the corresponding cyclohexadiene-1-carboxyl-CoA isomers (30% rate compared to CHC). The chain is Cyclohexane-1-carbonyl-CoA dehydrogenase from Geobacter metallireducens (strain ATCC 53774 / DSM 7210 / GS-15).